The chain runs to 472 residues: Chromosomal replication initiator protein DnaA (472 aa).

The tract at residues methionine 1–glutamate 73 is domain I, interacts with DnaA modulators. Positions glutamate 73–serine 128 are domain II. Positions proline 90 to alanine 124 are disordered. The segment covering glutamate 99–alanine 109 has biased composition (basic and acidic residues). Over residues glutamate 110–serine 119 the composition is skewed to polar residues. The interval proline 129–serine 351 is domain III, AAA+ region. Residues glycine 176, glycine 178, lysine 179, and threonine 180 each contribute to the ATP site. Residues lysine 352–glutamate 472 form a domain IV, binds dsDNA region.

The protein belongs to the DnaA family. As to quaternary structure, oligomerizes as a right-handed, spiral filament on DNA at oriC.

Its subcellular location is the cytoplasm. Functionally, plays an essential role in the initiation and regulation of chromosomal replication. ATP-DnaA binds to the origin of replication (oriC) to initiate formation of the DNA replication initiation complex once per cell cycle. Binds the DnaA box (a 9 base pair repeat at the origin) and separates the double-stranded (ds)DNA. Forms a right-handed helical filament on oriC DNA; dsDNA binds to the exterior of the filament while single-stranded (ss)DNA is stabiized in the filament's interior. The ATP-DnaA-oriC complex binds and stabilizes one strand of the AT-rich DNA unwinding element (DUE), permitting loading of DNA polymerase. After initiation quickly degrades to an ADP-DnaA complex that is not apt for DNA replication. Binds acidic phospholipids. In Rhodopseudomonas palustris (strain ATCC BAA-98 / CGA009), this protein is Chromosomal replication initiator protein DnaA.